Consider the following 371-residue polypeptide: Glutamate 5-kinase 2 (371 aa).

Residue K13 participates in ATP binding. Residues S53, D140, and N152 each contribute to the substrate site. ATP is bound by residues 172 to 173 (SD) and 214 to 220 (TGGMRSK). The PUA domain occupies 280-356 (EGEMILSDDC…KELTNRALID (77 aa)).

Belongs to the glutamate 5-kinase family.

The protein resides in the cytoplasm. The enzyme catalyses L-glutamate + ATP = L-glutamyl 5-phosphate + ADP. Its pathway is amino-acid biosynthesis; L-proline biosynthesis; L-glutamate 5-semialdehyde from L-glutamate: step 1/2. Functionally, catalyzes the transfer of a phosphate group to glutamate to form L-glutamate 5-phosphate. This chain is Glutamate 5-kinase 2 (proJ), found in Bacillus subtilis (strain 168).